The sequence spans 431 residues: Enolase (431 aa).

Residue Q167 participates in (2R)-2-phosphoglycerate binding. Catalysis depends on E209, which acts as the Proton donor. Residues D246, E289, and D316 each coordinate Mg(2+). (2R)-2-phosphoglycerate is bound by residues K341, R370, S371, and K392. The Proton acceptor role is filled by K341.

The protein belongs to the enolase family. In terms of assembly, component of the RNA degradosome, a multiprotein complex involved in RNA processing and mRNA degradation. Mg(2+) is required as a cofactor.

Its subcellular location is the cytoplasm. It localises to the secreted. It is found in the cell surface. The enzyme catalyses (2R)-2-phosphoglycerate = phosphoenolpyruvate + H2O. Its pathway is carbohydrate degradation; glycolysis; pyruvate from D-glyceraldehyde 3-phosphate: step 4/5. Functionally, catalyzes the reversible conversion of 2-phosphoglycerate (2-PG) into phosphoenolpyruvate (PEP). It is essential for the degradation of carbohydrates via glycolysis. The polypeptide is Enolase (Shewanella sp. (strain MR-4)).